Consider the following 315-residue polypeptide: Ribosomal RNA small subunit methyltransferase H (315 aa).

S-adenosyl-L-methionine-binding positions include 37 to 39 (GGH), D57, F83, D105, and Q112.

The protein belongs to the methyltransferase superfamily. RsmH family.

It localises to the cytoplasm. It catalyses the reaction cytidine(1402) in 16S rRNA + S-adenosyl-L-methionine = N(4)-methylcytidine(1402) in 16S rRNA + S-adenosyl-L-homocysteine + H(+). In terms of biological role, specifically methylates the N4 position of cytidine in position 1402 (C1402) of 16S rRNA. This chain is Ribosomal RNA small subunit methyltransferase H, found in Pseudomonas entomophila (strain L48).